Here is a 144-residue protein sequence, read N- to C-terminus: uncharacterized protein (144 aa).

Positions 1-58 (MDLASLNAFIAVAETGSFSEAGERLHLTQPAVSKRIAALEQQLQVRLFDRLGREVRLT) constitute an HTH lysR-type domain. The H-T-H motif DNA-binding region spans 18–38 (FSEAGERLHLTQPAVSKRIAA).

This sequence belongs to the LysR transcriptional regulatory family.

This is an uncharacterized protein from Azotobacter vinelandii.